A 141-amino-acid chain; its full sequence is Hemoglobin subunit beta-C (141 aa).

The Globin domain maps to 1–141 (PNKALITGFW…VASALAHRYH (141 aa)). Heme b contacts are provided by histidine 58 and histidine 87.

The protein belongs to the globin family. As to quaternary structure, heterotetramer of two alpha chains and two beta chains. As to expression, red blood cells.

Involved in oxygen transport from the lung to the various peripheral tissues. This Ovis aries musimon (Mouflon) protein is Hemoglobin subunit beta-C (HBBC).